Consider the following 495-residue polypeptide: Glutamyl-tRNA(Gln) amidotransferase subunit A (495 aa).

Residues lysine 78 and serine 158 each act as charge relay system in the active site. Serine 182 serves as the catalytic Acyl-ester intermediate.

This sequence belongs to the amidase family. GatA subfamily. Heterotrimer of A, B and C subunits.

The catalysed reaction is L-glutamyl-tRNA(Gln) + L-glutamine + ATP + H2O = L-glutaminyl-tRNA(Gln) + L-glutamate + ADP + phosphate + H(+). In terms of biological role, allows the formation of correctly charged Gln-tRNA(Gln) through the transamidation of misacylated Glu-tRNA(Gln) in organisms which lack glutaminyl-tRNA synthetase. The reaction takes place in the presence of glutamine and ATP through an activated gamma-phospho-Glu-tRNA(Gln). The chain is Glutamyl-tRNA(Gln) amidotransferase subunit A from Dinoroseobacter shibae (strain DSM 16493 / NCIMB 14021 / DFL 12).